A 57-amino-acid chain; its full sequence is Ribosome modulation factor (57 aa).

Residues 1–28 form a disordered region; that stretch reads MKRQKRDRLERAQSQGYKAGLNGRSHDE.

Belongs to the ribosome modulation factor family.

Its subcellular location is the cytoplasm. Its function is as follows. During stationary phase, converts 70S ribosomes to an inactive dimeric form (100S ribosomes). This Vibrio cholerae serotype O1 (strain MJ-1236) protein is Ribosome modulation factor.